The sequence spans 105 residues: Translation initiation factor 1A 2 (105 aa).

The tract at residues 1-22 is disordered; it reads MRKRREGSAAPSTQEVTRVRTP. The S1-like domain occupies 17–91; sequence TRVRTPRKEN…TKADVIWKYT (75 aa).

This sequence belongs to the eIF-1A family.

In terms of biological role, seems to be required for maximal rate of protein biosynthesis. Enhances ribosome dissociation into subunits and stabilizes the binding of the initiator Met-tRNA(I) to 40 S ribosomal subunits. The chain is Translation initiation factor 1A 2 (eIF1A2) from Methanosarcina acetivorans (strain ATCC 35395 / DSM 2834 / JCM 12185 / C2A).